The chain runs to 98 residues: Feather keratin 3 (98 aa).

Belongs to the avian keratin family. The avian keratins (F-ker, S-ker, C-ker and B-ker) are a complex mixture of very similar polypeptides.

This Gallus gallus (Chicken) protein is Feather keratin 3.